The following is a 589-amino-acid chain: V-type ATP synthase alpha chain (589 aa).

Residue 232–239 (GPFGSGKT) participates in ATP binding.

This sequence belongs to the ATPase alpha/beta chains family.

The enzyme catalyses ATP + H2O + 4 H(+)(in) = ADP + phosphate + 5 H(+)(out). In terms of biological role, produces ATP from ADP in the presence of a proton gradient across the membrane. The V-type alpha chain is a catalytic subunit. The chain is V-type ATP synthase alpha chain from Acetivibrio thermocellus (strain ATCC 27405 / DSM 1237 / JCM 9322 / NBRC 103400 / NCIMB 10682 / NRRL B-4536 / VPI 7372) (Clostridium thermocellum).